The chain runs to 392 residues: uncharacterized protein (392 aa).

It belongs to the glycosyltransferase 2 family.

This is an uncharacterized protein from Bacillus subtilis (strain 168).